The following is a 64-amino-acid chain: Large ribosomal subunit protein bL28 (64 aa).

Belongs to the bacterial ribosomal protein bL28 family.

The sequence is that of Large ribosomal subunit protein bL28 from Bifidobacterium longum (strain NCC 2705).